The chain runs to 556 residues: Energy-dependent translational throttle protein EttA (556 aa).

ABC transporter domains follow at residues 7–260 (YTMH…EQEQ) and 325–551 (IEVQ…RIKY). Position 40 to 47 (40 to 47 (GLNGAGKS)) interacts with ATP. The segment at 96-140 (SEVKNALTRLDEVYALYADPDADFDKLAAEQANLEAIIQAHDGHN) is arm. The segment at 243-323 (GNYSSWLEQK…IPPGPRLGDK (81 aa)) is ptIM. Position 357 to 364 (357 to 364 (GANGAGKS)) interacts with ATP.

It belongs to the ABC transporter superfamily. ABCF family. Translational throttle EttA subfamily. In terms of assembly, monomer. Probably contacts ribosomal proteins L1, L5, L33 and S7, the 16S and 23S rRNA and the P-site containing tRNA(fMet).

It is found in the cytoplasm. The catalysed reaction is ATP + H2O = ADP + phosphate + H(+). A translation factor that gates the progression of the 70S ribosomal initiation complex (IC, containing tRNA(fMet) in the P-site) into the translation elongation cycle by using a mechanism sensitive to the ATP/ADP ratio. Binds to the 70S ribosome E-site where it modulates the state of the translating ribosome during subunit translocation. ATP hydrolysis probably frees it from the ribosome, which can enter the elongation phase. The sequence is that of Energy-dependent translational throttle protein EttA from Haemophilus influenzae (strain ATCC 51907 / DSM 11121 / KW20 / Rd).